The chain runs to 392 residues: Putative F-box protein At1g71320 (392 aa).

Residues 8 to 55 (NPKTIFIPDDIAEGIFHHLPIKSLARFKVLSKKWTSMIESTYFSHKRL) enclose the F-box domain.

In Arabidopsis thaliana (Mouse-ear cress), this protein is Putative F-box protein At1g71320.